Here is a 294-residue protein sequence, read N- to C-terminus: Homoserine kinase (294 aa).

84–94 (PFSRGLGSSSA) serves as a coordination point for ATP.

Belongs to the GHMP kinase family. Homoserine kinase subfamily.

The protein resides in the cytoplasm. It catalyses the reaction L-homoserine + ATP = O-phospho-L-homoserine + ADP + H(+). It functions in the pathway amino-acid biosynthesis; L-threonine biosynthesis; L-threonine from L-aspartate: step 4/5. In terms of biological role, catalyzes the ATP-dependent phosphorylation of L-homoserine to L-homoserine phosphate. The polypeptide is Homoserine kinase (Campylobacter concisus (strain 13826)).